A 566-amino-acid polypeptide reads, in one-letter code: MFYMTVQEFDVVVVGSGAAGMVAALVAAHRGLSTVVVEKAPHYGGSTARSGGGVWIPNNEVLKRRGVRDTPEAARTYLHGIVGEIVEPERIDAYLDRGPEMLSFVLKHTPLKMCWVPGYSDYYPEAPGGRPGGRSIEPKPFNARKLGADMAGLEPAYGKVPLNVVVMQQDYVRLNQLKRHPRGVLRSMKVGARTMWAKATGKNLVGMGRALIGPLRIGLQRAGVPVELNTAFTDLFVENGVVSGVYVRDSHEAESAEPQLIRARRGVILACGGFEHNEQMRIKYQRAPITTEWTVGASANTGDGILAAEKLGAALDLMDDAWWGPTVPLVGKPWFALSERNSPGSIIVNMSGKRFMNESMPYVEACHHMYGGEHGQGPGPGENIPAWLVFDQRYRDRYIFAGLQPGQRIPSRWLDSGVIVQADTLAELAGKAGLPADELTATVQRFNAFARSGVDEDYHRGESAYDRYYGDPSNKPNPNLGEVGHPPYYGAKMVPGDLGTKGGIRTDVNGRALRDDGSIIDGLYAAGNVSAPVMGHTYPGPGGTIGPAMTFGYLAALHIADQAGKR.

10–39 (DVVVVGSGAAGMVAALVAAHRGLSTVVVEK) lines the FAD pocket.

It belongs to the FAD-dependent oxidoreductase 2 family. 3-oxosteroid dehydrogenase subfamily. The cofactor is FAD.

The catalysed reaction is a 3-oxosteroid + A = a 3-oxo-Delta(1)-steroid + AH2. It carries out the reaction a 3-oxo-Delta(4)-steroid + A = a 3-oxo-Delta(1,4)-steroid + AH2. Its function is as follows. Involved in the degradation of cholesterol. Catalyzes the elimination of the C-1 and C-2 hydrogen atoms of the A-ring from the polycyclic ring structure of 3-ketosteroids. Is also involved in the formation of 3-keto-1,4-diene-steroid from 3-keto-4-ene-steroid. The polypeptide is 3-oxosteroid 1-dehydrogenase (kstD) (Mycobacterium tuberculosis (strain CDC 1551 / Oshkosh)).